The chain runs to 339 residues: Anthranilate phosphoribosyltransferase (339 aa).

5-phospho-alpha-D-ribose 1-diphosphate is bound by residues glycine 82, 85–86 (GD), 92–95 (NIST), 110–118 (KHGNSSISS), and serine 122. Residue glycine 82 participates in anthranilate binding. Serine 94 serves as a coordination point for Mg(2+). Asparagine 113 contributes to the anthranilate binding site. Arginine 168 lines the anthranilate pocket. Residues aspartate 227 and glutamate 228 each coordinate Mg(2+).

It belongs to the anthranilate phosphoribosyltransferase family. As to quaternary structure, homodimer. The cofactor is Mg(2+).

The enzyme catalyses N-(5-phospho-beta-D-ribosyl)anthranilate + diphosphate = 5-phospho-alpha-D-ribose 1-diphosphate + anthranilate. It functions in the pathway amino-acid biosynthesis; L-tryptophan biosynthesis; L-tryptophan from chorismate: step 2/5. Its function is as follows. Catalyzes the transfer of the phosphoribosyl group of 5-phosphorylribose-1-pyrophosphate (PRPP) to anthranilate to yield N-(5'-phosphoribosyl)-anthranilate (PRA). The polypeptide is Anthranilate phosphoribosyltransferase (Ruthia magnifica subsp. Calyptogena magnifica).